The sequence spans 123 residues: MPTINQLVRKGRLAIKAKSKVPALEACPQKRGVCTRVYTTTPKKPNSALRKVCKVRLTNGFEVISYIGGEGHNLQEHSVVLIRGGRVKDLPGVRYHTVRGSLDTAGVKDRKQSRSKYGAKRPK.

At Asp89 the chain carries 3-methylthioaspartic acid. Residues 101–123 (SLDTAGVKDRKQSRSKYGAKRPK) form a disordered region. The segment covering 113 to 123 (SRSKYGAKRPK) has biased composition (basic residues).

The protein belongs to the universal ribosomal protein uS12 family. Part of the 30S ribosomal subunit. Contacts proteins S8 and S17. May interact with IF1 in the 30S initiation complex.

With S4 and S5 plays an important role in translational accuracy. Its function is as follows. Interacts with and stabilizes bases of the 16S rRNA that are involved in tRNA selection in the A site and with the mRNA backbone. Located at the interface of the 30S and 50S subunits, it traverses the body of the 30S subunit contacting proteins on the other side and probably holding the rRNA structure together. The combined cluster of proteins S8, S12 and S17 appears to hold together the shoulder and platform of the 30S subunit. In Laribacter hongkongensis (strain HLHK9), this protein is Small ribosomal subunit protein uS12.